A 318-amino-acid chain; its full sequence is Cis-3-alkyl-4-alkyloxetan-2-one decarboxylase (318 aa).

Residues 30-275 (PVVMVHGNPS…ADCGHYILED (246 aa)) enclose the AB hydrolase-1 domain.

It belongs to the AB hydrolase superfamily.

The enzyme catalyses a cis-3-alkyl-4-alkyloxetan-2-one = a cis-alkene + CO2. Involved in olefin biosynthesis. Catalyzes the elimination of carbon dioxide from beta-lactones to form the final olefin product. The S.oneidensis oleABCD genes produce 3,6,9,12,15,19,22,25,28-hentriacontanonaene, which may aid the cells in adapting to a sudden drop in temperature. This chain is Cis-3-alkyl-4-alkyloxetan-2-one decarboxylase, found in Shewanella oneidensis (strain ATCC 700550 / JCM 31522 / CIP 106686 / LMG 19005 / NCIMB 14063 / MR-1).